Reading from the N-terminus, the 433-residue chain is ATP-dependent RNA helicase SUB2 (433 aa).

The Q motif motif lies at 49–77; the sequence is TGFRDFLLKPELLRAIGDCGFEHPSEVQQ. The 176-residue stretch at 80–255 folds into the Helicase ATP-binding domain; sequence IPQSILGTDV…KKFMQNPLEI (176 aa). ATP is bound at residue 93 to 100; the sequence is AKSGLGKT. A DEAD box motif is present at residues 202–205; that stretch reads DECD. The Helicase C-terminal domain maps to 267–428; the sequence is GLQQYYIKLE…EFPEEGVDPS (162 aa).

The protein belongs to the DEAD box helicase family. DECD subfamily.

The protein resides in the nucleus. It carries out the reaction ATP + H2O = ADP + phosphate + H(+). ATP-binding RNA helicase involved in transcription elongation and required for the export of mRNA out of the nucleus. SUB2 also plays a role in pre-mRNA splicing and spliceosome assembly. May be involved in rDNA and telomeric silencing, and maintenance of genome integrity. In Scheffersomyces stipitis (strain ATCC 58785 / CBS 6054 / NBRC 10063 / NRRL Y-11545) (Yeast), this protein is ATP-dependent RNA helicase SUB2 (SUB2).